The chain runs to 201 residues: Small ribosomal subunit protein uS4c (201 aa).

Positions 15–44 (LGALPGLTNKRPRAGSDLRNQSRSGKKSQY) are disordered. One can recognise an S4 RNA-binding domain in the interval 89 to 149 (MRLDNILFRL…DEQNSRALIQ (61 aa)).

It belongs to the universal ribosomal protein uS4 family. Part of the 30S ribosomal subunit. Contacts protein S5. The interaction surface between S4 and S5 is involved in control of translational fidelity.

Its subcellular location is the plastid. The protein localises to the chloroplast. Its function is as follows. One of the primary rRNA binding proteins, it binds directly to 16S rRNA where it nucleates assembly of the body of the 30S subunit. In terms of biological role, with S5 and S12 plays an important role in translational accuracy. This Daucus carota (Wild carrot) protein is Small ribosomal subunit protein uS4c (rps4).